A 319-amino-acid polypeptide reads, in one-letter code: Ankyrin repeat domain-containing protein 1 (319 aa).

Residues 63–89 are a coiled coil; the sequence is EKEREAELKKKKLEQRSKLENLEDLEI. 5 ANK repeats span residues 152–181, 185–214, 218–247, 251–280, and 284–315; these read YKRT…QIEF, LEST…KISA, LLST…DLNA, EGDT…DLNV, and AGKT…KASR.

As to quaternary structure, interacts with TTN/titin and YBX1. In terms of tissue distribution, expressed in heart. In postnatal neonatal heart, it is expressed in an asymmetrical way; left ventricle favored towards right ventricle. Whether or not this could be correlated with a hypertrophic heart is still a matter of debate. Levels increase gradually from newborn to adult.

Its subcellular location is the nucleus. Functionally, may play an important role in endothelial cell activation. May act as a nuclear transcription factor that negatively regulates the expression of cardiac genes. The protein is Ankyrin repeat domain-containing protein 1 (ANKRD1) of Sus scrofa (Pig).